The chain runs to 215 residues: 24 kDa Ras-like protein (215 aa).

17–24 contacts GTP; it reads GGGGVGKS. The short motif at 39–47 is the Effector region element; it reads YDPTIEDSY. GTP-binding positions include 64–68 and 123–126; these read DTAGQ and NKCD. The disordered stretch occupies residues 179 to 199; the sequence is QTGRPAIAAGGGGPAGSYTQD. C212 bears the Cysteine methyl ester mark. A lipid anchor (S-farnesyl cysteine) is attached at C212. Residues 213–215 constitute a propeptide, removed in mature form; the sequence is VIA.

It belongs to the small GTPase superfamily. Ras family.

The protein resides in the cell membrane. It catalyses the reaction GTP + H2O = GDP + phosphate + H(+). Functionally, ras proteins bind GDP/GTP and possess intrinsic GTPase activity. The sequence is that of 24 kDa Ras-like protein (CC-RAS) from Coprinopsis cinerea (strain Okayama-7 / 130 / ATCC MYA-4618 / FGSC 9003) (Inky cap fungus).